We begin with the raw amino-acid sequence, 350 residues long: Phosphoribosylformylglycinamidine cyclo-ligase (350 aa).

This sequence belongs to the AIR synthase family.

The protein localises to the cytoplasm. It catalyses the reaction 2-formamido-N(1)-(5-O-phospho-beta-D-ribosyl)acetamidine + ATP = 5-amino-1-(5-phospho-beta-D-ribosyl)imidazole + ADP + phosphate + H(+). Its pathway is purine metabolism; IMP biosynthesis via de novo pathway; 5-amino-1-(5-phospho-D-ribosyl)imidazole from N(2)-formyl-N(1)-(5-phospho-D-ribosyl)glycinamide: step 2/2. The polypeptide is Phosphoribosylformylglycinamidine cyclo-ligase (Pseudoalteromonas translucida (strain TAC 125)).